Consider the following 712-residue polypeptide: Ribosomal RNA large subunit methyltransferase K/L (712 aa).

In terms of domain architecture, THUMP spans 43–154 (LAYRITLWTR…NGQLTISMNF (112 aa)).

The protein belongs to the methyltransferase superfamily. RlmKL family.

The protein resides in the cytoplasm. The catalysed reaction is guanosine(2445) in 23S rRNA + S-adenosyl-L-methionine = N(2)-methylguanosine(2445) in 23S rRNA + S-adenosyl-L-homocysteine + H(+). It carries out the reaction guanosine(2069) in 23S rRNA + S-adenosyl-L-methionine = N(2)-methylguanosine(2069) in 23S rRNA + S-adenosyl-L-homocysteine + H(+). Specifically methylates the guanine in position 2445 (m2G2445) and the guanine in position 2069 (m7G2069) of 23S rRNA. This is Ribosomal RNA large subunit methyltransferase K/L from Shewanella frigidimarina (strain NCIMB 400).